We begin with the raw amino-acid sequence, 592 residues long: Inactive metallocarboxypeptidase ecm14 (592 aa).

An N-terminal signal peptide occupies residues 1–22 (MYRQDHVFVVLCAVLLAGQVTA). Positions 23–175 (VPAGTGINPH…AIYESRYPTR (153 aa)) are excised as a propeptide. In terms of domain architecture, Peptidase M14 spans 203-524 (HYQPFNVILQ…NSVLVLGHFL (322 aa)). The Zn(2+) site is built by H267 and E270. Substrate-binding positions include 267–270 (HARE), R325, and 342–343 (DR). Residues C336 and C359 are joined by a disulfide bond. N383 is a glycosylation site (N-linked (GlcNAc...) asparagine). H399 lines the Zn(2+) pocket. Residue 400-401 (SY) participates in substrate binding. N548 is a glycosylation site (N-linked (GlcNAc...) asparagine).

It belongs to the peptidase M14 family. The cofactor is Zn(2+).

It is found in the vacuole. The protein localises to the secreted. In terms of biological role, inactive carboxypeptidase that may play a role in cell wall organization and biogenesis. The chain is Inactive metallocarboxypeptidase ecm14 (ecm14) from Talaromyces stipitatus (strain ATCC 10500 / CBS 375.48 / QM 6759 / NRRL 1006) (Penicillium stipitatum).